A 294-amino-acid chain; its full sequence is Halotolerance protein HAL1 (294 aa).

Residues 115 to 153 form a disordered region; the sequence is LKRGTKEQEDINSSTSKKSAVINNFSGEKTPNPRPQSSN. The span at 125-153 shows a compositional bias: polar residues; that stretch reads INSSTSKKSAVINNFSGEKTPNPRPQSSN. A Phosphoserine modification is found at serine 266.

The protein resides in the cytoplasm. Functionally, involved in salt tolerance. The protein is Halotolerance protein HAL1 (HAL1) of Saccharomyces cerevisiae (strain ATCC 204508 / S288c) (Baker's yeast).